The following is a 320-amino-acid chain: ATP-dependent 6-phosphofructokinase isozyme 1 (320 aa).

ATP is bound at residue Gly12. Residues 22–26 and 55–60 each bind ADP; these read RGVVR and RYSVSD. ATP is bound by residues 73-74 and 103-106; these read RF and GDGS. Asp104 contacts Mg(2+). Substrate is bound at residue 126–128; it reads TID. The active-site Proton acceptor is the Asp128. Residue Arg155 coordinates ADP. Substrate contacts are provided by residues Arg163 and 170–172; that span reads MGR. ADP-binding positions include 186–188, Lys212, and 214–216; these read GCE and KKH. Residues Glu223, Arg244, and 250 to 253 contribute to the substrate site; that span reads HIQR.

It belongs to the phosphofructokinase type A (PFKA) family. ATP-dependent PFK group I subfamily. Prokaryotic clade 'B1' sub-subfamily. Homotetramer. Mg(2+) serves as cofactor.

It localises to the cytoplasm. It carries out the reaction beta-D-fructose 6-phosphate + ATP = beta-D-fructose 1,6-bisphosphate + ADP + H(+). It participates in carbohydrate degradation; glycolysis; D-glyceraldehyde 3-phosphate and glycerone phosphate from D-glucose: step 3/4. With respect to regulation, allosterically activated by ADP and other diphosphonucleosides, and allosterically inhibited by phosphoenolpyruvate. Its function is as follows. Catalyzes the phosphorylation of D-fructose 6-phosphate to fructose 1,6-bisphosphate by ATP, the first committing step of glycolysis. In Shigella boydii serotype 18 (strain CDC 3083-94 / BS512), this protein is ATP-dependent 6-phosphofructokinase isozyme 1.